A 197-amino-acid chain; its full sequence is Guanylate kinase (197 aa).

The region spanning glycine 9–serine 188 is the Guanylate kinase-like domain. An ATP-binding site is contributed by alanine 16–serine 23.

It belongs to the guanylate kinase family.

Its subcellular location is the cytoplasm. It carries out the reaction GMP + ATP = GDP + ADP. In terms of biological role, essential for recycling GMP and indirectly, cGMP. This Chlorobium luteolum (strain DSM 273 / BCRC 81028 / 2530) (Pelodictyon luteolum) protein is Guanylate kinase.